The primary structure comprises 440 residues: 3-phosphoshikimate 1-carboxyvinyltransferase (440 aa).

3-phosphoshikimate contacts are provided by K19, S20, and R24. Residue K19 coordinates phosphoenolpyruvate. Residues G92 and R121 each coordinate phosphoenolpyruvate. Residues S166, Q168, D315, and K342 each coordinate 3-phosphoshikimate. Q168 is a binding site for phosphoenolpyruvate. D315 functions as the Proton acceptor in the catalytic mechanism. Phosphoenolpyruvate-binding residues include R346 and R399.

This sequence belongs to the EPSP synthase family. In terms of assembly, monomer.

The protein localises to the cytoplasm. It catalyses the reaction 3-phosphoshikimate + phosphoenolpyruvate = 5-O-(1-carboxyvinyl)-3-phosphoshikimate + phosphate. It participates in metabolic intermediate biosynthesis; chorismate biosynthesis; chorismate from D-erythrose 4-phosphate and phosphoenolpyruvate: step 6/7. Catalyzes the transfer of the enolpyruvyl moiety of phosphoenolpyruvate (PEP) to the 5-hydroxyl of shikimate-3-phosphate (S3P) to produce enolpyruvyl shikimate-3-phosphate and inorganic phosphate. This is 3-phosphoshikimate 1-carboxyvinyltransferase from Leptospira borgpetersenii serovar Hardjo-bovis (strain JB197).